Consider the following 368-residue polypeptide: Anti-sigma-X factor RsiX (368 aa).

Positions 73-87 are enriched in polar residues; the sequence is QPQQKEASQENAVTK. The segment at 73–101 is disordered; it reads QPQQKEASQENAVTKTETEDSPKAASSLD.

The protein localises to the cell membrane. Functionally, the anti-sigma factor for extracytoplasmic function (ECF) sigma factor SigX, inhibits SigX activity and stabilizes it. This Bacillus subtilis (strain 168) protein is Anti-sigma-X factor RsiX (rsiX).